Consider the following 138-residue polypeptide: Cysteine desulfuration protein SufE (138 aa).

Cys51 acts as the Cysteine persulfide intermediate in catalysis.

The protein belongs to the SufE family. Homodimer. Interacts with SufS.

It localises to the cytoplasm. Its pathway is cofactor biosynthesis; iron-sulfur cluster biosynthesis. Its function is as follows. Participates in cysteine desulfuration mediated by SufS. Cysteine desulfuration mobilizes sulfur from L-cysteine to yield L-alanine and constitutes an essential step in sulfur metabolism for biosynthesis of a variety of sulfur-containing biomolecules. Functions as a sulfur acceptor for SufS, by mediating the direct transfer of the sulfur atom from the S-sulfanylcysteine of SufS, an intermediate product of cysteine desulfuration process. This chain is Cysteine desulfuration protein SufE, found in Photorhabdus laumondii subsp. laumondii (strain DSM 15139 / CIP 105565 / TT01) (Photorhabdus luminescens subsp. laumondii).